The primary structure comprises 244 residues: uncharacterized protein (244 aa).

The region spanning Met1–Tyr78 is the WGR domain.

This is an uncharacterized protein from Escherichia coli (strain K12).